The chain runs to 891 residues: Probable serine/threonine-protein kinase mkcC (891 aa).

Disordered stretches follow at residues 24 to 70 (IELN…TATI), 85 to 121 (ANNN…APSS), 264 to 435 (DDPQ…AREK), 495 to 526 (NSLG…PEVS), and 565 to 588 (TTAS…DDYD). Residues 29 to 41 (QEEQQQPEQQEQP) are compositionally biased toward low complexity. Over residues 45 to 58 (EELKDNNEKIKTSE) the composition is skewed to basic and acidic residues. Low complexity-rich tracts occupy residues 61–70 (TTTTTTTATI), 86–105 (NNNT…LNNN), 297–314 (STSN…TTGK), 322–360 (SNSS…SGTS), and 379–397 (TTGN…TTSS). The segment covering 422 to 432 (RKRKEQKRSRA) has biased composition (basic residues). Positions 495 to 522 (NSLGSSINKNNSNNTTTTTTTTNTNNKS) are enriched in low complexity. One can recognise a Protein kinase domain in the interval 616–864 (YKNLKQIGSG…AEQLLKHPWI (249 aa)). Residues 622–630 (IGSGGFGSV) and Lys-645 each bind ATP. Asp-735 (proton acceptor) is an active-site residue.

The protein belongs to the protein kinase superfamily. STE Ser/Thr protein kinase family. STE20 subfamily. Mg(2+) serves as cofactor.

It carries out the reaction L-seryl-[protein] + ATP = O-phospho-L-seryl-[protein] + ADP + H(+). The enzyme catalyses L-threonyl-[protein] + ATP = O-phospho-L-threonyl-[protein] + ADP + H(+). This chain is Probable serine/threonine-protein kinase mkcC, found in Dictyostelium discoideum (Social amoeba).